The sequence spans 1447 residues: Bud site selection protein 4 (1447 aa).

Residues 1–16 (MHDAESTVDSLLKEID) are compositionally biased toward basic and acidic residues. 2 disordered regions span residues 1 to 38 (MHDA…PHNW) and 57 to 76 (NTRS…KMST). Ser10 bears the Phosphoserine mark. 2 stretches are compositionally biased toward polar residues: residues 22-32 (TKSNITQNGSE) and 59-76 (RSNA…KMST). Phosphoserine occurs at positions 78, 81, 91, 96, and 167. Residues 272-316 (NLPSKLLNTSNNSHSDSRSPTASVEDLNISTNLPGADSSQNNPVT) are disordered. Over residues 277–316 (LLNTSNNSHSDSRSPTASVEDLNISTNLPGADSSQNNPVT) the composition is skewed to polar residues. Thr365 carries the phosphothreonine modification. Ser367 carries the phosphoserine modification. The tract at residues 444-479 (HQESEHANEQPAIIPQKDSSEETFTELNNESEFQRN) is disordered. A Phosphoserine modification is found at Ser511. The tract at residues 529–591 (KTSAEEHDLS…NEEPEHVPLL (63 aa)) is disordered. The span at 538-548 (SSSCEDQSVSE) shows a compositional bias: polar residues. The span at 549 to 580 (ARNKDRIEEKEVETKDENIETEKDESEYHKVE) shows a compositional bias: basic and acidic residues. At Ser616 the chain carries Phosphoserine. The span at 648–664 (ANSQFSQQSSITTASTV) shows a compositional bias: polar residues. The disordered stretch occupies residues 648-673 (ANSQFSQQSSITTASTVDSKKDNGST). The interval 768–879 (EHENIPLSTH…SLWESSYELK (112 aa)) is interaction with IQG1. Ser805 and Ser811 each carry phosphoserine. In terms of domain architecture, PH spans 1302–1413 (NIYKEGYLLQ…WYNKLQEVVE (112 aa)).

Interacts with AXL1, AXL2, IQG1 and SEC3. Post-translationally, phosphorylated by CDC28.

Its subcellular location is the bud neck. Required for establishment of the axial budding pattern in haploid cells. Cooperates with other bud site selection proteins to recognize a spatial landmark during mitosis and they subsequently become a landmark for downstream polarity establishment factors that coordinate axial budding and cytokinesis. Involved in the septin organization at the bud neck. The chain is Bud site selection protein 4 (BUD4) from Saccharomyces cerevisiae (strain ATCC 204508 / S288c) (Baker's yeast).